A 211-amino-acid polypeptide reads, in one-letter code: Riboflavin transporter RibU (211 aa).

The next 5 helical transmembrane spans lie at 34–54 (AYIA…FPLI), 66–86 (ILPV…GVLL), 104–124 (IGLP…SYFW), 134–154 (ILGS…LNYI), and 180–200 (AMVV…FALI).

Belongs to the prokaryotic riboflavin transporter (P-RFT) (TC 2.A.87) family. In terms of assembly, forms a stable energy-coupling factor (ECF) transporter complex composed of 2 membrane-embedded substrate-binding proteins (S component), 2 ATP-binding proteins (A component) and 2 transmembrane proteins (T component) upon coexpression of the 4 components in E.coli.

It localises to the cell membrane. Substrate-binding (S) component of an energy-coupling factor (ECF) ABC-transporter complex. Mediates riboflavin uptake, may also transport FMN and roseoflavin. Probably a riboflavin-binding protein that interacts with the energy-coupling factor (ECF) ABC-transporter complex. Unlike classic ABC transporters this ECF transporter provides the energy necessary to transport a number of different substrates. The substrates themselves are bound by transmembrane, not extracytoplasmic soluble proteins. Expression of the complex plus RibU in E.coli allows riboflavin uptake. The polypeptide is Riboflavin transporter RibU (ribU) (Streptococcus thermophilus (strain ATCC BAA-250 / LMG 18311)).